The chain runs to 196 residues: uncharacterized protein (196 aa).

It to E.coli YjaG.

This is an uncharacterized protein from Haemophilus influenzae (strain ATCC 51907 / DSM 11121 / KW20 / Rd).